Here is a 505-residue protein sequence, read N- to C-terminus: ATP synthase subunit alpha (505 aa).

170–177 contacts ATP; the sequence is GDRQTGKT.

Belongs to the ATPase alpha/beta chains family. In terms of assembly, F-type ATPases have 2 components, CF(1) - the catalytic core - and CF(0) - the membrane proton channel. CF(1) has five subunits: alpha(3), beta(3), gamma(1), delta(1), epsilon(1). CF(0) has four main subunits: a(1), b(1), b'(1) and c(9-12).

The protein localises to the cellular thylakoid membrane. The catalysed reaction is ATP + H2O + 4 H(+)(in) = ADP + phosphate + 5 H(+)(out). Produces ATP from ADP in the presence of a proton gradient across the membrane. The alpha chain is a regulatory subunit. The chain is ATP synthase subunit alpha from Synechococcus sp. (strain RCC307).